Reading from the N-terminus, the 198-residue chain is Transcription factor LBX2 (198 aa).

3 disordered regions span residues 24–46 (MVPR…SPLC), 63–89 (ALQP…RKSR), and 173–198 (DPGL…QVDD). Positions 85–144 (RRKSRTAFTAQQVLELERRFVFQKYLAPSERDGLATRLGLANAQVVTWFQNRRAKLKRDV) form a DNA-binding region, homeobox.

The protein localises to the nucleus. In terms of biological role, transcription factor. The sequence is that of Transcription factor LBX2 (LBX2) from Homo sapiens (Human).